Consider the following 477-residue polypeptide: Acetolactate synthase small subunit 2, chloroplastic (477 aa).

The N-terminal 53 residues, 1–53, are a transit peptide targeting the chloroplast; sequence MAATTTATSLFSSRLHFQNQNQGYGFPAKTPNSLQVNQIIDGRKMRNATVLSA. 2 ACT domains span residues 78 to 150 and 309 to 383; these read TISV…DLSK and TLSL…NITH. L-valine is bound by residues Asp-85, Ile-89, Ile-90, Asn-103, Ile-104, Asn-316, Val-320, Leu-321, Asn-334, and Ile-335.

Belongs to the acetolactate synthase small subunit family. The acetolactate synthase complex contains 4 homodimers of the large catalytic subunits, and 1 homotetramer of the small regulatory subunits. Expressed in roots in the vascular tissuem in cells around the quiescent center, in floral organs at the tips of young siliques and in the joint region between the silique and the pedicel. Barely detectable in mature leaves or siliques.

The protein resides in the plastid. It localises to the chloroplast. The protein localises to the peroxisome. Its pathway is amino-acid biosynthesis; L-isoleucine biosynthesis; L-isoleucine from 2-oxobutanoate: step 1/4. The protein operates within amino-acid biosynthesis; L-valine biosynthesis; L-valine from pyruvate: step 1/4. Its function is as follows. Regulatory subunit of acetohydroxy-acid synthase. Involved in the feed-back inhibition by branched-chain amino acids but not in herbicide tolerance. May play a role in valine and isoleucine-mediated feedback inhibition in roots. In vitro, inhibited by valine, but not leucine or isoleucine. Required for reproductive development and sodium homeostasis. The protein is Acetolactate synthase small subunit 2, chloroplastic of Arabidopsis thaliana (Mouse-ear cress).